A 310-amino-acid polypeptide reads, in one-letter code: AMMECR1-like protein (310 aa).

The disordered stretch occupies residues 26 to 92 (LSGSGTHSHG…SGALSPLPRP (67 aa)). Polar residues-rich tracts occupy residues 28 to 66 (GSGT…NVSD) and 74 to 84 (SPITRMNTASG). The residue at position 74 (serine 74) is a Phosphoserine. In terms of domain architecture, AMMECR1 spans 97 to 291 (NSTKNLVVTA…ISYAEYIASR (195 aa)).

In Mus musculus (Mouse), this protein is AMMECR1-like protein (Ammecr1l).